The primary structure comprises 458 residues: NADH-quinone oxidoreductase subunit N 1 (458 aa).

The next 14 membrane-spanning stretches (helical) occupy residues 12–32 (ALIP…AGLL), 37–57 (EVLV…IPSF), 70–90 (FLTI…LLVL), 101–121 (FNES…LVSA), 124–144 (LISF…LVGI), 159–179 (FMLG…IYGA), 199–219 (ILIG…LVPF), 230–250 (APTP…LGAF), 266–286 (SNFL…FALI), 293–313 (MLAY…IVGT), 321–341 (VAYM…VIAF), 361–381 (IAML…GFIV), 393–413 (GFTW…YYYL), and 438–458 (VAIL…LFLI).

It belongs to the complex I subunit 2 family. As to quaternary structure, NDH-1 is composed of 14 different subunits. Subunits NuoA, H, J, K, L, M, N constitute the membrane sector of the complex.

It is found in the cell inner membrane. It carries out the reaction a quinone + NADH + 5 H(+)(in) = a quinol + NAD(+) + 4 H(+)(out). Its function is as follows. NDH-1 shuttles electrons from NADH, via FMN and iron-sulfur (Fe-S) centers, to quinones in the respiratory chain. The immediate electron acceptor for the enzyme in this species is believed to be ubiquinone. Couples the redox reaction to proton translocation (for every two electrons transferred, four hydrogen ions are translocated across the cytoplasmic membrane), and thus conserves the redox energy in a proton gradient. In Thermodesulfovibrio yellowstonii (strain ATCC 51303 / DSM 11347 / YP87), this protein is NADH-quinone oxidoreductase subunit N 1.